The sequence spans 64 residues: Conotoxin VnMLCL-042 (64 aa).

Positions 1-19 are cleaved as a signal peptide; the sequence is MLCLPVFIILLLLASPAAP. The propeptide occupies 20 to 43; the sequence is NPLQTRIQSNLIRAGPEDANMKTD. At Met-63 the chain carries Methionine amide.

The protein belongs to the conotoxin T superfamily. In terms of tissue distribution, expressed by the venom duct.

The protein localises to the secreted. The chain is Conotoxin VnMLCL-042 from Conus ventricosus (Mediterranean cone).